The following is a 134-amino-acid chain: Cilia- and flagella-associated protein 144 (134 aa).

The disordered stretch occupies residues 76–95 (QGPRKKYPETQTENQEVGWD).

The protein belongs to the CFAP144 family. As to quaternary structure, microtubule inner protein component of sperm flagellar doublet microtubules.

It localises to the cytoplasm. Its subcellular location is the cytoskeleton. It is found in the cilium axoneme. The protein resides in the flagellum axoneme. Functionally, microtubule inner protein (MIP) part of the dynein-decorated doublet microtubules (DMTs) in cilia axoneme, which is required for motile cilia beating. The polypeptide is Cilia- and flagella-associated protein 144 (Homo sapiens (Human)).